The chain runs to 477 residues: Ectonucleotide pyrophosphatase/phosphodiesterase family member 5 (477 aa).

The first 24 residues, 1–24 (MTSKFLLVSFILAALSLSTTFSLQ), serve as a signal peptide directing secretion. Zn(2+) is bound by residues aspartate 36 and threonine 72. Threonine 72 serves as the catalytic Nucleophile. N-linked (GlcNAc...) asparagine glycans are attached at residues asparagine 101 and asparagine 158. Zn(2+) is bound by residues aspartate 191, histidine 195, aspartate 238, and histidine 239. 2 N-linked (GlcNAc...) asparagine glycosylation sites follow: asparagine 292 and asparagine 329. Position 339 (histidine 339) interacts with Zn(2+). N-linked (GlcNAc...) asparagine glycosylation is found at asparagine 362, asparagine 369, asparagine 382, and asparagine 389. Residues 432 to 452 (PYFIGVSLGSIIVIVFFVIFI) traverse the membrane as a helical segment.

This sequence belongs to the nucleotide pyrophosphatase/phosphodiesterase family. Zn(2+) is required as a cofactor. Post-translationally, N-glycosylated.

It localises to the secreted. The protein resides in the membrane. Functionally, can hydrolyze NAD but cannot hydrolyze nucleotide di- and triphosphates. Lacks lysopholipase D activity. May play a role in neuronal cell communication. The polypeptide is Ectonucleotide pyrophosphatase/phosphodiesterase family member 5 (Homo sapiens (Human)).